We begin with the raw amino-acid sequence, 248 residues long: Anamorsin homolog (248 aa).

The N-terminal SAM-like domain stretch occupies residues 4 to 130; it reads FKGLQKSLYI…ETGSSARLSF (127 aa). Residues 131–161 form a linker region; it reads AKKSPSMNVWKISGDDEELIDEEELLDEEDK. [2Fe-2S] cluster contacts are provided by Cys172, Cys181, Cys184, and Cys186. The tract at residues 172–186 is fe-S binding site A; the sequence is CSTTGKRKACKNCSC. The [4Fe-4S] cluster site is built by Cys209, Cys212, Cys220, and Cys223. 2 short sequence motifs (cx2C motif) span residues 209–212 and 220–223; these read CGNC and CSTC. Residues 209–223 are fe-S binding site B; sequence CGNCYLGDAFRCSTC.

The protein belongs to the anamorsin family. In terms of assembly, monomer. The cofactor is [2Fe-2S] cluster. [4Fe-4S] cluster serves as cofactor.

The protein localises to the cytoplasm. Its subcellular location is the mitochondrion intermembrane space. Functionally, component of the cytosolic iron-sulfur (Fe-S) protein assembly (CIA) machinery. Required for the maturation of extramitochondrial Fe-S proteins. Part of an electron transfer chain functioning in an early step of cytosolic Fe-S biogenesis, facilitating the de novo assembly of a [4Fe-4S] cluster on the cytosolic Fe-S scaffold complex. Electrons are transferred from NADPH via a FAD- and FMN-containing diflavin oxidoreductase. Together with the diflavin oxidoreductase, also required for the assembly of the diferric tyrosyl radical cofactor of ribonucleotide reductase (RNR), probably by providing electrons for reduction during radical cofactor maturation in the catalytic small subunit. The chain is Anamorsin homolog from Drosophila mojavensis (Fruit fly).